The primary structure comprises 115 residues: Probable 4-amino-4-deoxy-L-arabinose-phosphoundecaprenol flippase subunit ArnE (115 aa).

3 helical membrane-spanning segments follow: residues 42-62 (PWPW…LLLL), 65-85 (VEVG…TLVA), and 93-112 (VDRR…ALLG). Positions 46 to 113 (LALLALGLGL…IVAGVALLGR (68 aa)) constitute an EamA domain.

This sequence belongs to the ArnE family. As to quaternary structure, heterodimer of ArnE and ArnF.

It localises to the cell inner membrane. It participates in bacterial outer membrane biogenesis; lipopolysaccharide biosynthesis. Its function is as follows. Translocates 4-amino-4-deoxy-L-arabinose-phosphoundecaprenol (alpha-L-Ara4N-phosphoundecaprenol) from the cytoplasmic to the periplasmic side of the inner membrane. This is Probable 4-amino-4-deoxy-L-arabinose-phosphoundecaprenol flippase subunit ArnE from Pseudomonas paraeruginosa (strain DSM 24068 / PA7) (Pseudomonas aeruginosa (strain PA7)).